We begin with the raw amino-acid sequence, 250 residues long: Putative inner dynein arm light chain, axonemal (250 aa).

Positions 168–250 (MRKALQAHEE…QLEGITAPKK (83 aa)) form a coiled coil.

This sequence belongs to the inner dynein arm light chain family.

Its subcellular location is the cell projection. It is found in the cilium. It localises to the dynein axonemal particle. In terms of biological role, may play a dynamic role in flagellar motility. The chain is Putative inner dynein arm light chain, axonemal from Drosophila melanogaster (Fruit fly).